The following is a 456-amino-acid chain: Glycosyl hydrolase family 109 protein (456 aa).

Residues 1–31 (MKLNRRHFLKTAGLSAAGILTSQLPLSSAEA) constitute a signal peptide (tat-type signal). NAD(+)-binding positions include 62–63 (QR), Asp-84, 133–136 (WEWH), 153–154 (EV), and Asn-182. Residues Tyr-211, Arg-230, 242–245 (YPTH), and Tyr-324 each bind substrate. Position 242 (Tyr-242) interacts with NAD(+).

This sequence belongs to the Gfo/Idh/MocA family. Glycosyl hydrolase 109 subfamily. NAD(+) serves as cofactor. In terms of processing, predicted to be exported by the Tat system. The position of the signal peptide cleavage has not been experimentally proven.

Functionally, glycosidase. The sequence is that of Glycosyl hydrolase family 109 protein from Shewanella pealeana (strain ATCC 700345 / ANG-SQ1).